Here is a 358-residue protein sequence, read N- to C-terminus: Carbamoyl phosphate synthase small chain (358 aa).

CPSase stretches follow at residues 1 to 168 (MYNR…PALG) and 1 to 171 (MYNR…GRGR). 3 residues coordinate L-glutamine: serine 46, glycine 220, and glycine 222. The 187-residue stretch at 172–358 (RVVLVDLGMK…FIKNIDNNMK (187 aa)) folds into the Glutamine amidotransferase type-1 domain. Cysteine 247 acts as the Nucleophile in catalysis. L-glutamine is bound by residues methionine 248, glutamine 251, asparagine 289, glycine 291, and tyrosine 292. Catalysis depends on residues histidine 332 and glutamate 334.

This sequence belongs to the CarA family. Composed of two chains; the small (or glutamine) chain promotes the hydrolysis of glutamine to ammonia, which is used by the large (or ammonia) chain to synthesize carbamoyl phosphate. Tetramer of heterodimers (alpha,beta)4.

The catalysed reaction is hydrogencarbonate + L-glutamine + 2 ATP + H2O = carbamoyl phosphate + L-glutamate + 2 ADP + phosphate + 2 H(+). It catalyses the reaction L-glutamine + H2O = L-glutamate + NH4(+). Its pathway is amino-acid biosynthesis; L-arginine biosynthesis; carbamoyl phosphate from bicarbonate: step 1/1. It participates in pyrimidine metabolism; UMP biosynthesis via de novo pathway; (S)-dihydroorotate from bicarbonate: step 1/3. Functionally, small subunit of the glutamine-dependent carbamoyl phosphate synthetase (CPSase). CPSase catalyzes the formation of carbamoyl phosphate from the ammonia moiety of glutamine, carbonate, and phosphate donated by ATP, constituting the first step of 2 biosynthetic pathways, one leading to arginine and/or urea and the other to pyrimidine nucleotides. The small subunit (glutamine amidotransferase) binds and cleaves glutamine to supply the large subunit with the substrate ammonia. The polypeptide is Carbamoyl phosphate synthase small chain (Fusobacterium nucleatum subsp. nucleatum (strain ATCC 25586 / DSM 15643 / BCRC 10681 / CIP 101130 / JCM 8532 / KCTC 2640 / LMG 13131 / VPI 4355)).